The primary structure comprises 237 residues: Ribosomal RNA small subunit methyltransferase G (237 aa).

S-adenosyl-L-methionine-binding positions include G78, F83, 129 to 130 (AE), and R148.

Belongs to the methyltransferase superfamily. RNA methyltransferase RsmG family.

It localises to the cytoplasm. Its function is as follows. Specifically methylates the N7 position of a guanine in 16S rRNA. This chain is Ribosomal RNA small subunit methyltransferase G, found in Streptococcus thermophilus (strain ATCC BAA-491 / LMD-9).